The chain runs to 116 residues: Nucleoid-associated protein A9601_00191 (116 aa).

The protein belongs to the YbaB/EbfC family. Homodimer.

The protein localises to the cytoplasm. It is found in the nucleoid. Functionally, binds to DNA and alters its conformation. May be involved in regulation of gene expression, nucleoid organization and DNA protection. The protein is Nucleoid-associated protein A9601_00191 of Prochlorococcus marinus (strain AS9601).